A 205-amino-acid chain; its full sequence is Guanylate kinase (205 aa).

The region spanning 18–196 is the Guanylate kinase-like domain; it reads PKLFIISAPA…AYQVLRSIFI (179 aa). An ATP-binding site is contributed by 25–32; the sequence is APAGAGKT.

The protein belongs to the guanylate kinase family.

Its subcellular location is the cytoplasm. The catalysed reaction is GMP + ATP = GDP + ADP. In terms of biological role, essential for recycling GMP and indirectly, cGMP. The protein is Guanylate kinase (gmk) of Chlamydia trachomatis serovar D (strain ATCC VR-885 / DSM 19411 / UW-3/Cx).